The sequence spans 178 residues: tRNA (cytidine(56)-2'-O)-methyltransferase (178 aa).

Leu-88 contributes to the S-adenosyl-L-methionine binding site.

The protein belongs to the aTrm56 family. Homodimer.

Its subcellular location is the cytoplasm. It carries out the reaction cytidine(56) in tRNA + S-adenosyl-L-methionine = 2'-O-methylcytidine(56) in tRNA + S-adenosyl-L-homocysteine + H(+). Specifically catalyzes the AdoMet-dependent 2'-O-ribose methylation of cytidine at position 56 in tRNAs. The sequence is that of tRNA (cytidine(56)-2'-O)-methyltransferase from Methanopyrus kandleri (strain AV19 / DSM 6324 / JCM 9639 / NBRC 100938).